The following is a 188-amino-acid chain: UPF0301 protein CPn_0139/CP_0633/CPj0139/CpB0140 (188 aa).

It belongs to the UPF0301 (AlgH) family.

This Chlamydia pneumoniae (Chlamydophila pneumoniae) protein is UPF0301 protein CPn_0139/CP_0633/CPj0139/CpB0140.